The sequence spans 281 residues: Nucleoid occlusion protein (281 aa).

Residues 145–164 (EALAQRLGKGQSTIANKLRL) constitute a DNA-binding region (H-T-H motif).

It belongs to the ParB family.

It is found in the cytoplasm. The protein resides in the nucleoid. In terms of biological role, effects nucleoid occlusion by binding relatively nonspecifically to DNA and preventing the assembly of the division machinery in the vicinity of the nucleoid, especially under conditions that disturb the cell cycle. It helps to coordinate cell division and chromosome segregation by preventing the formation of the Z ring through the nucleoid, which would cause chromosome breakage. This chain is Nucleoid occlusion protein, found in Geobacillus sp. (strain WCH70).